The chain runs to 571 residues: Cytoplasmic polyadenylation element-binding protein 2 (571 aa).

Disordered stretches follow at residues 1-23 (MSKS…NGDR) and 51-75 (FKQN…VSQE). A compositionally biased stretch (basic and acidic residues) spans 61 to 75 (SESRHENEENKVSQE). The region spanning 435–517 (LVAFIGGVPR…KRVEIKPYFF (83 aa)) is the RRM domain.

Its function is as follows. Cytoplasmic polyadenylation element binding protein that binds to and regulates the translation of specific mRNAs. This chain is Cytoplasmic polyadenylation element-binding protein 2 (cpb-2), found in Caenorhabditis remanei (Caenorhabditis vulgaris).